We begin with the raw amino-acid sequence, 921 residues long: Phototropin-1A (921 aa).

The segment covering M1 to G11 has biased composition (gly residues). Disordered stretches follow at residues M1–L59 and T88–A118. Low complexity predominate over residues S40 to A51. Residues R97 to A117 are compositionally biased toward polar residues. Positions V123–S197 constitute a PAS 1 domain. Residues N172–Q177, R190, N205, N215, and Q236 contribute to the FMN site. C173 carries the post-translational modification S-4a-FMN cysteine. The region spanning S197–V251 is the PAC 1 domain. Positions R286–T295 are enriched in polar residues. 2 disordered regions span residues R286–R347 and S364–E390. 2 stretches are compositionally biased toward basic and acidic residues: residues P312 to S321 and S364 to D376. Positions R400–Q473 constitute a PAS 2 domain. Residues N449–Q454, R467, N482, N492, and Q513 contribute to the FMN site. C450 carries the post-translational modification S-4a-FMN cysteine. Positions A474 to G528 constitute a PAC 2 domain. Residues F594–F881 enclose the Protein kinase domain. ATP-binding positions include L600 to V608 and K623. D719 functions as the Proton acceptor in the catalytic mechanism.

It belongs to the protein kinase superfamily. Ser/Thr protein kinase family. In terms of assembly, homodimer. The cofactor is FMN. Post-translationally, autophosphorylated in response to blue light irradiation. In terms of processing, 2 molecules of FMN bind covalently to cysteines after exposure to blue light and are reversed in the dark. Highly expressed in coleoptiles of dark-grown seedlings.

It catalyses the reaction L-seryl-[protein] + ATP = O-phospho-L-seryl-[protein] + ADP + H(+). The catalysed reaction is L-threonyl-[protein] + ATP = O-phospho-L-threonyl-[protein] + ADP + H(+). Its function is as follows. Protein kinase that acts as a blue light photoreceptor in a signal-transduction pathway for phototropic responses. Regulates a wide range of physiological activities in plants that maximize the efficiency of photosynthesis, such as chloroplast relocations, stomata opening, and leaf expansion. The protein is Phototropin-1A (PHOT1A) of Oryza sativa subsp. japonica (Rice).